The sequence spans 219 residues: Ribose-5-phosphate isomerase A (219 aa).

Residues 28 to 31, 81 to 84, and 94 to 97 contribute to the substrate site; these read TGST, DGAD, and KGGG. E103 (proton acceptor) is an active-site residue. A substrate-binding site is contributed by K121.

It belongs to the ribose 5-phosphate isomerase family. As to quaternary structure, homodimer.

It carries out the reaction aldehydo-D-ribose 5-phosphate = D-ribulose 5-phosphate. The protein operates within carbohydrate degradation; pentose phosphate pathway; D-ribose 5-phosphate from D-ribulose 5-phosphate (non-oxidative stage): step 1/1. Functionally, catalyzes the reversible conversion of ribose-5-phosphate to ribulose 5-phosphate. The polypeptide is Ribose-5-phosphate isomerase A (Enterobacter cloacae).